A 394-amino-acid polypeptide reads, in one-letter code: p-hydroxybenzoate hydroxylase (394 aa).

Residues serine 13, glutamate 32, arginine 42–valine 47, and glutamine 102 contribute to the FAD site. Substrate contacts are provided by residues tyrosine 201, serine 212–arginine 214, and tyrosine 222. Residue aspartate 286 coordinates FAD. Proline 293 provides a ligand contact to substrate. Leucine 299–asparagine 300 lines the FAD pocket.

This sequence belongs to the aromatic-ring hydroxylase family. In terms of assembly, homodimer. FAD is required as a cofactor.

The catalysed reaction is 4-hydroxybenzoate + NADPH + O2 + H(+) = 3,4-dihydroxybenzoate + NADP(+) + H2O. It participates in aromatic compound metabolism; benzoate degradation via hydroxylation; 3,4-dihydroxybenzoate from benzoate: step 2/2. In terms of biological role, catalyzes the incorporation of an atom of dioxygen into p-hydroxybenzoate (p-OHB) to form 3,4-dihydroxybenzoate (3,4DOHB). The reaction occurs in two parts: reduction of the flavin adenine dinucleotide (FAD) in the enzyme by reduced nicotinamide adenine dinucleotide phosphate (NADPH) in response to binding p-hydroxybenzoate to the enzyme and oxidation of reduced FAD with oxygen to form a hydroperoxide, which then oxygenates p-hydroxybenzoate. The protein is p-hydroxybenzoate hydroxylase of Pseudomonas aeruginosa (strain ATCC 15692 / DSM 22644 / CIP 104116 / JCM 14847 / LMG 12228 / 1C / PRS 101 / PAO1).